The sequence spans 295 residues: Phosphoribosylaminoimidazole-succinocarboxamide synthase (295 aa).

This sequence belongs to the SAICAR synthetase family.

The enzyme catalyses 5-amino-1-(5-phospho-D-ribosyl)imidazole-4-carboxylate + L-aspartate + ATP = (2S)-2-[5-amino-1-(5-phospho-beta-D-ribosyl)imidazole-4-carboxamido]succinate + ADP + phosphate + 2 H(+). The protein operates within purine metabolism; IMP biosynthesis via de novo pathway; 5-amino-1-(5-phospho-D-ribosyl)imidazole-4-carboxamide from 5-amino-1-(5-phospho-D-ribosyl)imidazole-4-carboxylate: step 1/2. This is Phosphoribosylaminoimidazole-succinocarboxamide synthase from Halorhodospira halophila (strain DSM 244 / SL1) (Ectothiorhodospira halophila (strain DSM 244 / SL1)).